Consider the following 141-residue polypeptide: 3-hydroxyacyl-[acyl-carrier-protein] dehydratase FabZ (141 aa).

The active site involves histidine 48.

It belongs to the thioester dehydratase family. FabZ subfamily.

The protein localises to the cytoplasm. It catalyses the reaction a (3R)-hydroxyacyl-[ACP] = a (2E)-enoyl-[ACP] + H2O. In terms of biological role, involved in unsaturated fatty acids biosynthesis. Catalyzes the dehydration of short chain beta-hydroxyacyl-ACPs and long chain saturated and unsaturated beta-hydroxyacyl-ACPs. The chain is 3-hydroxyacyl-[acyl-carrier-protein] dehydratase FabZ from Herpetosiphon aurantiacus (strain ATCC 23779 / DSM 785 / 114-95).